We begin with the raw amino-acid sequence, 137 residues long: Small ribosomal subunit protein uS12 (137 aa).

The segment at 1-57 (MPTINQLVRKPRQSKSKKSDSPVLNRGFNSKKKQFTNLNSPQKRGVCTRVGTMTPRK) is disordered. At D102 the chain carries 3-methylthioaspartic acid. The tract at residues 118-137 (SGVDGRRQGRSLYGTKKPKN) is disordered.

Belongs to the universal ribosomal protein uS12 family. In terms of assembly, part of the 30S ribosomal subunit. Contacts proteins S8 and S17. May interact with IF1 in the 30S initiation complex.

In terms of biological role, with S4 and S5 plays an important role in translational accuracy. Functionally, interacts with and stabilizes bases of the 16S rRNA that are involved in tRNA selection in the A site and with the mRNA backbone. Located at the interface of the 30S and 50S subunits, it traverses the body of the 30S subunit contacting proteins on the other side and probably holding the rRNA structure together. The combined cluster of proteins S8, S12 and S17 appears to hold together the shoulder and platform of the 30S subunit. The polypeptide is Small ribosomal subunit protein uS12 (Staphylococcus haemolyticus (strain JCSC1435)).